Reading from the N-terminus, the 229-residue chain is Cytidylate kinase (229 aa).

Residue Gly-12–Thr-20 coordinates ATP.

This sequence belongs to the cytidylate kinase family. Type 1 subfamily.

The protein resides in the cytoplasm. The catalysed reaction is CMP + ATP = CDP + ADP. It catalyses the reaction dCMP + ATP = dCDP + ADP. The sequence is that of Cytidylate kinase from Pseudomonas aeruginosa (strain UCBPP-PA14).